The primary structure comprises 447 residues: Gamma-glutamyl phosphate reductase (447 aa).

This sequence belongs to the gamma-glutamyl phosphate reductase family.

The protein localises to the cytoplasm. It catalyses the reaction L-glutamate 5-semialdehyde + phosphate + NADP(+) = L-glutamyl 5-phosphate + NADPH + H(+). It functions in the pathway amino-acid biosynthesis; L-proline biosynthesis; L-glutamate 5-semialdehyde from L-glutamate: step 2/2. In terms of biological role, catalyzes the NADPH-dependent reduction of L-glutamate 5-phosphate into L-glutamate 5-semialdehyde and phosphate. The product spontaneously undergoes cyclization to form 1-pyrroline-5-carboxylate. In Methanosarcina mazei (strain ATCC BAA-159 / DSM 3647 / Goe1 / Go1 / JCM 11833 / OCM 88) (Methanosarcina frisia), this protein is Gamma-glutamyl phosphate reductase.